We begin with the raw amino-acid sequence, 61 residues long: Photosystem II reaction center protein K (61 aa).

A propeptide spanning residues 1-24 is cleaved from the precursor; that stretch reads MLNIFSLICICLNSALHSSSFFFA. A helical membrane pass occupies residues 32–52; sequence FFNPIVDFMPVIPVLFFLLAL.

The protein belongs to the PsbK family. In terms of assembly, PSII is composed of 1 copy each of membrane proteins PsbA, PsbB, PsbC, PsbD, PsbE, PsbF, PsbH, PsbI, PsbJ, PsbK, PsbL, PsbM, PsbT, PsbX, PsbY, PsbZ, Psb30/Ycf12, at least 3 peripheral proteins of the oxygen-evolving complex and a large number of cofactors. It forms dimeric complexes.

Its subcellular location is the plastid. The protein localises to the chloroplast thylakoid membrane. Functionally, one of the components of the core complex of photosystem II (PSII). PSII is a light-driven water:plastoquinone oxidoreductase that uses light energy to abstract electrons from H(2)O, generating O(2) and a proton gradient subsequently used for ATP formation. It consists of a core antenna complex that captures photons, and an electron transfer chain that converts photonic excitation into a charge separation. This chain is Photosystem II reaction center protein K, found in Drimys granadensis.